A 473-amino-acid chain; its full sequence is MSAKTYNAGVKEYRHTYWEPHYNVQDTDILACFKIVPQPGVDREEAAAAVAAESSTGTWTTVWTDLLTDLDYYKGRSYRIEDVPGDDSSFYAFIAYPIDLFEEGSVVNVLTSLTGNVFGFKAVRSLRLEDVRFPIAYVKTCGGPPNGIQVERDILNKYGRAYLGCTIKPKLGLSAKNYGRAVYECLRGGLDFTKDDENVNSQPFMRWRQRFDFVMEAIHKAERETGERKGHYLNVTAPTPEEMFKRAEYAKELKAPIIMHDYIAGGFCANTGLANWCRDNGILLHIHRAMHAVIDRNPHHGIHFRVLAKMLRLSGGDHLHSGTVVGKLEGDREATLGWIDIMRDSFIKEDRSRGIMFDQDWGSMPGVVPVASGGIHVWHMPALVTIFGDDACLQFGGGTLGHPWGNAAGAAANRVALEACVEARNRGVPIEKEGKAILTEAAKHSPELKIAMETWKEIKFEFDTVDKLDVAHK.

Substrate contacts are provided by Asn-116 and Thr-166. The Proton acceptor role is filled by Lys-168. A substrate-binding site is contributed by Lys-170. 3 residues coordinate Mg(2+): Lys-194, Asp-196, and Glu-197. Lys-194 carries the N6-carboxylysine modification. Residue His-287 is the Proton acceptor of the active site. Residues Arg-288, His-320, and Ser-372 each coordinate substrate.

Belongs to the RuBisCO large chain family. Type I subfamily. As to quaternary structure, heterohexadecamer of 8 large chains and 8 small chains. It depends on Mg(2+) as a cofactor.

It carries out the reaction 2 (2R)-3-phosphoglycerate + 2 H(+) = D-ribulose 1,5-bisphosphate + CO2 + H2O. The enzyme catalyses D-ribulose 1,5-bisphosphate + O2 = 2-phosphoglycolate + (2R)-3-phosphoglycerate + 2 H(+). Functionally, ruBisCO catalyzes two reactions: the carboxylation of D-ribulose 1,5-bisphosphate, the primary event in carbon dioxide fixation, as well as the oxidative fragmentation of the pentose substrate. Both reactions occur simultaneously and in competition at the same active site. The polypeptide is Ribulose bisphosphate carboxylase large chain (Nitrosomonas europaea (strain ATCC 19718 / CIP 103999 / KCTC 2705 / NBRC 14298)).